The primary structure comprises 122 residues: Small ribosomal subunit protein uS13 (122 aa).

The segment at 93–122 is disordered; the sequence is RKGLPVRGQTTKNNARTRKGKRKTVGSASK. The segment covering 107-116 has biased composition (basic residues); sequence ARTRKGKRKT.

It belongs to the universal ribosomal protein uS13 family. As to quaternary structure, part of the 30S ribosomal subunit. Forms a loose heterodimer with protein S19. Forms two bridges to the 50S subunit in the 70S ribosome.

In terms of biological role, located at the top of the head of the 30S subunit, it contacts several helices of the 16S rRNA. In the 70S ribosome it contacts the 23S rRNA (bridge B1a) and protein L5 of the 50S subunit (bridge B1b), connecting the 2 subunits; these bridges are implicated in subunit movement. Contacts the tRNAs in the A and P-sites. This chain is Small ribosomal subunit protein uS13, found in Wolinella succinogenes (strain ATCC 29543 / DSM 1740 / CCUG 13145 / JCM 31913 / LMG 7466 / NCTC 11488 / FDC 602W) (Vibrio succinogenes).